The following is a 639-amino-acid chain: Developmental regulatory protein wetA (639 aa).

Disordered stretches follow at residues Met65–Phe97, Thr206–Ser369, Gly418–Glu552, and Leu587–Arg613. Residues His69–Ala78 show a composition bias toward basic residues. Composition is skewed to polar residues over residues Glu81–Ser90 and Val214–Met226. Residues Arg246–Thr255 are compositionally biased toward basic residues. 3 stretches are compositionally biased toward low complexity: residues Gln256–Gln275, Gln346–Ser369, and His506–Val526.

It belongs to the wetA family.

Its function is as follows. BrlA, abaA and wetA are pivotal regulators of conidiophore development and conidium maturation. They act individually and together to regulate their own expression and that of numerous other sporulation-specific genes. Acts as a crucial regulator of both conidiation capacity and conidial quality. Plays a role in virulence. This is Developmental regulatory protein wetA from Beauveria bassiana (strain ARSEF 2860) (White muscardine disease fungus).